Here is a 547-residue protein sequence, read N- to C-terminus: Phosphomethylpyrimidine synthase (547 aa).

Residues asparagine 150, methionine 179, tyrosine 208, histidine 244, 264-266 (SRG), 305-308 (DGLR), and glutamate 344 contribute to the substrate site. Histidine 348 contributes to the Zn(2+) binding site. Tyrosine 371 provides a ligand contact to substrate. Histidine 412 provides a ligand contact to Zn(2+). Cysteine 492, cysteine 495, and cysteine 500 together coordinate [4Fe-4S] cluster.

The protein belongs to the ThiC family. [4Fe-4S] cluster serves as cofactor.

It catalyses the reaction 5-amino-1-(5-phospho-beta-D-ribosyl)imidazole + S-adenosyl-L-methionine = 4-amino-2-methyl-5-(phosphooxymethyl)pyrimidine + CO + 5'-deoxyadenosine + formate + L-methionine + 3 H(+). It participates in cofactor biosynthesis; thiamine diphosphate biosynthesis. In terms of biological role, catalyzes the synthesis of the hydroxymethylpyrimidine phosphate (HMP-P) moiety of thiamine from aminoimidazole ribotide (AIR) in a radical S-adenosyl-L-methionine (SAM)-dependent reaction. This chain is Phosphomethylpyrimidine synthase, found in Nocardia farcinica (strain IFM 10152).